The following is a 441-amino-acid chain: Polyketide methyltransferase ustM (441 aa).

The segment at 266–368 (LEVGAGLGGT…VRKLLRGGGF (103 aa)) is methyltransferase (CMeT) domain.

It belongs to the methyltransferase superfamily.

It functions in the pathway secondary metabolite biosynthesis. Functionally, polyketide methyltransferase; part of the gene cluster that mediates the biosynthesis of ustilaginoidins, dimeric gamma-naphthopyrones isolated from different fungal species. The first step in the biosynthesis of ustilaginoidins is the production of gamma-naphthopyrone precursor YWA1 by the non-reducing polyketide synthase ustP, via condensation of one acetyl-CoA starter unit with 6 malonyl-CoA units. YWA1 is then probably substrate of the ustZ to yield norrubrofusarin via a dehydration reaction. A key enzyme in the biosynthetic pathway is the laccase ustL, which catalyzes the oxidative dimerization of norrubrofusarin to ustilaginoidin A. It can produce the M- and P-atropisomers in varying amounts, depending on the reaction conditions. For the biosynthesis of 3-methylustilaginoid in derivatives such as chaetochromin A, a methylated derivative of YWA1 is required. The C-methylation is considered to be catalyzed by ustM, the phosphopantetheine attachment site of which indicates that it acts on the growing polyketide chain before release of the product. For the biosynthesis of chaetochromin A, it is assumed that saturation of the D2 double bond takes place before dimerization, and is probably catalyzed by an external reductase because no candidate gene was identified within the cluster. This Ustilaginoidea virens (Rice false smut fungus) protein is Polyketide methyltransferase ustM.